Reading from the N-terminus, the 512-residue chain is NAD(P)H-quinone oxidoreductase chain 4, chloroplastic (512 aa).

14 consecutive transmembrane segments (helical) span residues 4–24 (LPWL…IPFI), 34–54 (WYAL…FGYH), 87–107 (MPLV…AWPV), 111–131 (AKLF…VFVS), 134–154 (LLLF…LLLV), 167–187 (FILY…TMAF), 210–230 (ILLY…FPLH), 241–261 (HYST…YALI), 273–293 (LIFA…AALT), 312–332 (MGFV…GAVL), 333–353 (QMIS…TTYD), 373–395 (TFAM…GFVA), 416–436 (IITF…LSML), and 462–482 (IFVI…PKMA).

It belongs to the complex I subunit 4 family.

It localises to the plastid. It is found in the chloroplast thylakoid membrane. It catalyses the reaction a plastoquinone + NADH + (n+1) H(+)(in) = a plastoquinol + NAD(+) + n H(+)(out). The enzyme catalyses a plastoquinone + NADPH + (n+1) H(+)(in) = a plastoquinol + NADP(+) + n H(+)(out). The sequence is that of NAD(P)H-quinone oxidoreductase chain 4, chloroplastic from Chlorokybus atmophyticus (Soil alga).